The primary structure comprises 314 residues: Hydroxyacyl-coenzyme A dehydrogenase, mitochondrial (314 aa).

A mitochondrion-targeting transit peptide spans 1–12 (MAFVTRQFVRSM). Residues 34 to 39 (GGGLMG) and Asp57 contribute to the NAD(+) site. CoA is bound at residue Ser73. An N6-acetyllysine modification is found at Lys75. Lys80 provides a ligand contact to CoA. N6-succinyllysine is present on Lys80. An N6-acetyllysine; alternate mark is found at Lys81 and Lys87. N6-succinyllysine; alternate occurs at positions 81 and 87. Glu122 lines the NAD(+) pocket. Residue Lys125 is modified to N6-acetyllysine. Position 127 (Lys127) interacts with NAD(+). Lys127 is subject to N6-(2-hydroxyisobutyryl)lysine. At Lys136 the chain carries N6-acetyllysine; alternate. An N6-succinyllysine; alternate modification is found at Lys136. NAD(+) contacts are provided by Ser149 and Asn173. Residue Ser149 participates in CoA binding. Residue Lys179 is modified to N6-acetyllysine. N6-acetyllysine; alternate is present on residues Lys185, Lys192, and Lys202. Residues Lys185, Lys192, and Lys202 each carry the N6-succinyllysine; alternate modification. Position 206 is an N6-succinyllysine (Lys206). Lys212 and Lys241 each carry N6-acetyllysine; alternate. 2 positions are modified to N6-succinyllysine; alternate: Lys212 and Lys241. Residue Lys305 coordinates NAD(+). Lys312 is subject to N6-acetyllysine; alternate. Lys312 is modified (N6-succinyllysine; alternate).

It belongs to the 3-hydroxyacyl-CoA dehydrogenase family. Homodimer. Interacts with GLUD1; this interaction inhibits the activation of glutamate dehydrogenase 1 (GLUD1). In terms of processing, succinylation at Lys-81, adjacent to a coenzyme A binding site. Desuccinylated by SIRT5.

It localises to the mitochondrion matrix. The enzyme catalyses a (3S)-3-hydroxyacyl-CoA + NAD(+) = a 3-oxoacyl-CoA + NADH + H(+). It catalyses the reaction (3S)-3-hydroxybutanoyl-CoA + NAD(+) = acetoacetyl-CoA + NADH + H(+). The catalysed reaction is (3S)-hydroxydecanoyl-CoA + NAD(+) = 3-oxodecanoyl-CoA + NADH + H(+). It carries out the reaction (3S)-hydroxyhexadecanoyl-CoA + NAD(+) = 3-oxohexadecanoyl-CoA + NADH + H(+). The protein operates within lipid metabolism; fatty acid beta-oxidation. Its function is as follows. Mitochondrial fatty acid beta-oxidation enzyme that catalyzes the third step of the beta-oxidation cycle for medium and short-chain 3-hydroxy fatty acyl-CoAs (C4 to C10). Plays a role in the control of insulin secretion by inhibiting the activation of glutamate dehydrogenase 1 (GLUD1), an enzyme that has an important role in regulating amino acid-induced insulin secretion. Plays a role in the maintenance of normal spermatogenesis through the reduction of fatty acid accumulation in the testes. This Rattus norvegicus (Rat) protein is Hydroxyacyl-coenzyme A dehydrogenase, mitochondrial (Hadh).